The following is a 261-amino-acid chain: MTTSNNVNGCFGDTKLTKVFVGGLAWDTHKEAMYDHFIKYGDILEAVIISDKLTRRSKGYGFVTFKDAKAATRACEDSTPIINGRRANCNLASLGGRLRKSPTMTSPQQGPKNGNRATPPHVGNHSQWYYPSGFTNQQHQQQNHQAVPFYGYPSAYVAPNMTFNQKVGYVGGTYMNGYYAQMQPQPQSQPQPQYYHHHMYGGGRVMVGAASPMVPFYTVYPYHQSQAIGFPQPSFSKPLSFSTPPISGTVGGESIQKKAIH.

In terms of domain architecture, RRM spans 17-94 (TKVFVGGLAW…RRANCNLASL (78 aa)). Residues 96–122 (GRLRKSPTMTSPQQGPKNGNRATPPHV) are disordered. A compositionally biased stretch (polar residues) spans 102-116 (PTMTSPQQGPKNGNR).

As to expression, expressed in vasculature of leaves, roots and siliques.

The protein localises to the nucleus. Functionally, probable RNA-binding protein involved in the regulation of abscisic acid (ABA) response during seed germination. May regulate transcript levels of several germination-responsive genes under ABA. The chain is Probable RNA-binding protein ARP1 from Arabidopsis thaliana (Mouse-ear cress).